A 133-amino-acid polypeptide reads, in one-letter code: Small ribosomal subunit protein uS8 (133 aa).

This sequence belongs to the universal ribosomal protein uS8 family. In terms of assembly, part of the 30S ribosomal subunit. Contacts proteins S5 and S12.

In terms of biological role, one of the primary rRNA binding proteins, it binds directly to 16S rRNA central domain where it helps coordinate assembly of the platform of the 30S subunit. This Synechococcus sp. (strain RCC307) protein is Small ribosomal subunit protein uS8.